A 126-amino-acid chain; its full sequence is MSILNKAILTGGLVMGVAFSAMAHPELKSSVPQADSAVAAPEKIQLNFSENLTVKFSGAKLTMTGMKGMSSHSPMPVAAKVAPGADPKSMVIIPREPLPAGTYRVDWRAVSSDTHPITGNYTFTVK.

The N-terminal stretch at 1 to 23 (MSILNKAILTGGLVMGVAFSAMA) is a signal peptide. Histidine 24 is a binding site for Cu(2+). Methionine 63, methionine 66, methionine 69, histidine 72, and methionine 75 together coordinate Cu(+). Position 115 (histidine 115) interacts with Cu(2+).

It belongs to the CopC family. As to quaternary structure, monomer-dimer equilibrium in solution for the apo protein. Dimerization is significantly enhanced upon binding of copper(I).

Its subcellular location is the periplasm. Copper-binding protein involved in copper resistance. This chain is Copper resistance protein C, found in Escherichia coli.